A 429-amino-acid polypeptide reads, in one-letter code: S-adenosylmethionine synthase (429 aa).

His14 lines the ATP pocket. Asp16 contributes to the Mg(2+) binding site. K(+) is bound at residue Glu42. Positions 55 and 98 each coordinate L-methionine. The flexible loop stretch occupies residues 98–108 (QSADINRGVDR). ATP is bound by residues 165 to 167 (DAK), 252 to 253 (KF), Asp261, 267 to 268 (RK), Ala284, and Lys288. Residue Asp261 coordinates L-methionine. Residue Lys292 coordinates L-methionine.

It belongs to the AdoMet synthase family. In terms of assembly, homotetramer; dimer of dimers. Requires Mg(2+) as cofactor. K(+) is required as a cofactor.

The protein localises to the cytoplasm. It catalyses the reaction L-methionine + ATP + H2O = S-adenosyl-L-methionine + phosphate + diphosphate. It participates in amino-acid biosynthesis; S-adenosyl-L-methionine biosynthesis; S-adenosyl-L-methionine from L-methionine: step 1/1. In terms of biological role, catalyzes the formation of S-adenosylmethionine (AdoMet) from methionine and ATP. The overall synthetic reaction is composed of two sequential steps, AdoMet formation and the subsequent tripolyphosphate hydrolysis which occurs prior to release of AdoMet from the enzyme. The protein is S-adenosylmethionine synthase of Porphyromonas gingivalis (strain ATCC BAA-308 / W83).